Here is a 97-residue protein sequence, read N- to C-terminus: Cobalt transport protein CbiN (97 aa).

A run of 2 helical transmembrane segments spans residues 6 to 26 and 68 to 88; these read VLMILGVIILILAPLIMYSGL and SLLFALQAAIGAIIIGYFFGY.

This sequence belongs to the CbiN family. In terms of assembly, forms an energy-coupling factor (ECF) transporter complex composed of an ATP-binding protein (A component, CbiO), a transmembrane protein (T component, CbiQ) and 2 possible substrate-capture proteins (S components, CbiM and CbiN) of unknown stoichimetry.

The protein localises to the cell membrane. It functions in the pathway cofactor biosynthesis; adenosylcobalamin biosynthesis. Part of the energy-coupling factor (ECF) transporter complex CbiMNOQ involved in cobalt import. The polypeptide is Cobalt transport protein CbiN (Methanococcus maripaludis (strain C5 / ATCC BAA-1333)).